The primary structure comprises 353 residues: Phosphoribosylformylglycinamidine cyclo-ligase (353 aa).

Belongs to the AIR synthase family.

The protein localises to the cytoplasm. It catalyses the reaction 2-formamido-N(1)-(5-O-phospho-beta-D-ribosyl)acetamidine + ATP = 5-amino-1-(5-phospho-beta-D-ribosyl)imidazole + ADP + phosphate + H(+). Its pathway is purine metabolism; IMP biosynthesis via de novo pathway; 5-amino-1-(5-phospho-D-ribosyl)imidazole from N(2)-formyl-N(1)-(5-phospho-D-ribosyl)glycinamide: step 2/2. This chain is Phosphoribosylformylglycinamidine cyclo-ligase, found in Methylocella silvestris (strain DSM 15510 / CIP 108128 / LMG 27833 / NCIMB 13906 / BL2).